Consider the following 406-residue polypeptide: Arginine deiminase (406 aa).

Cys-396 acts as the Amidino-cysteine intermediate in catalysis.

Belongs to the arginine deiminase family.

The protein resides in the cytoplasm. It carries out the reaction L-arginine + H2O = L-citrulline + NH4(+). The protein operates within amino-acid degradation; L-arginine degradation via ADI pathway; carbamoyl phosphate from L-arginine: step 1/2. This is Arginine deiminase from Aliivibrio salmonicida (strain LFI1238) (Vibrio salmonicida (strain LFI1238)).